We begin with the raw amino-acid sequence, 143 residues long: Large ribosomal subunit protein uL13 (143 aa).

This sequence belongs to the universal ribosomal protein uL13 family. As to quaternary structure, part of the 50S ribosomal subunit.

This protein is one of the early assembly proteins of the 50S ribosomal subunit, although it is not seen to bind rRNA by itself. It is important during the early stages of 50S assembly. In Solibacter usitatus (strain Ellin6076), this protein is Large ribosomal subunit protein uL13.